The following is a 420-amino-acid chain: Phosphoglycerate kinase, cytosolic (420 aa).

(2R)-3-phosphoglycerate-binding residues include valine 23, aspartate 24, phenylalanine 25, asparagine 26, arginine 39, serine 61, histidine 62, glycine 64, arginine 65, arginine 135, histidine 171, and arginine 172. Glycine 217 lines the ADP pocket. Residue glycine 217 participates in CDP binding. Residue lysine 219 participates in (2R)-3-phosphoglycerate binding. Residue lysine 219 participates in AMP binding. Aspartate 222 is a CDP binding site. Aspartate 222 provides a ligand contact to Mg(2+). Residues lysine 223 and glycine 241 each coordinate ADP. Position 223 (lysine 223) interacts with AMP. Residue lysine 223 participates in ATP binding. Glycine 241 contributes to the CDP binding site. Residues alanine 242 and alanine 314 each coordinate AMP. Residues alanine 242 and alanine 314 each coordinate ATP. Residues alanine 314 and asparagine 338 each contribute to the ADP site. 2 residues coordinate CDP: glycine 339 and phenylalanine 344. The ADP site is built by phenylalanine 344, glutamate 345, aspartate 377, and serine 378. Residue glutamate 345 coordinates AMP. Residues glutamate 345, aspartate 377, and serine 378 each coordinate ATP. Aspartate 377 serves as a coordination point for Mg(2+).

It belongs to the phosphoglycerate kinase family. In terms of assembly, monomer. It depends on Mg(2+) as a cofactor.

Its subcellular location is the cytoplasm. The catalysed reaction is (2R)-3-phosphoglycerate + ATP = (2R)-3-phospho-glyceroyl phosphate + ADP. The protein operates within carbohydrate degradation; glycolysis; pyruvate from D-glyceraldehyde 3-phosphate: step 2/5. This Trypanosoma congolense protein is Phosphoglycerate kinase, cytosolic (C1PGK).